A 901-amino-acid chain; its full sequence is Alanine--tRNA ligase (901 aa).

Positions 581, 585, 684, and 688 each coordinate Zn(2+).

This sequence belongs to the class-II aminoacyl-tRNA synthetase family. The cofactor is Zn(2+).

It is found in the cytoplasm. The enzyme catalyses tRNA(Ala) + L-alanine + ATP = L-alanyl-tRNA(Ala) + AMP + diphosphate. In terms of biological role, catalyzes the attachment of alanine to tRNA(Ala) in a two-step reaction: alanine is first activated by ATP to form Ala-AMP and then transferred to the acceptor end of tRNA(Ala). Also edits incorrectly charged Ser-tRNA(Ala) and Gly-tRNA(Ala) via its editing domain. This chain is Alanine--tRNA ligase, found in Mycobacterium ulcerans (strain Agy99).